The sequence spans 220 residues: ATP phosphoribosyltransferase (220 aa).

It belongs to the ATP phosphoribosyltransferase family. Short subfamily. In terms of assembly, heteromultimer composed of HisG and HisZ subunits.

The protein localises to the cytoplasm. It carries out the reaction 1-(5-phospho-beta-D-ribosyl)-ATP + diphosphate = 5-phospho-alpha-D-ribose 1-diphosphate + ATP. Its pathway is amino-acid biosynthesis; L-histidine biosynthesis; L-histidine from 5-phospho-alpha-D-ribose 1-diphosphate: step 1/9. Functionally, catalyzes the condensation of ATP and 5-phosphoribose 1-diphosphate to form N'-(5'-phosphoribosyl)-ATP (PR-ATP). Has a crucial role in the pathway because the rate of histidine biosynthesis seems to be controlled primarily by regulation of HisG enzymatic activity. This is ATP phosphoribosyltransferase from Anaeromyxobacter sp. (strain Fw109-5).